The primary structure comprises 216 residues: 3-keto-L-gulonate-6-phosphate decarboxylase UlaD (216 aa).

Substrate is bound at residue aspartate 11. Residues glutamate 33 and aspartate 62 each contribute to the Mg(2+) site. A substrate-binding site is contributed by arginine 192.

Belongs to the HPS/KGPDC family. KGPDC subfamily. As to quaternary structure, homodimer. It depends on Mg(2+) as a cofactor.

The enzyme catalyses 3-dehydro-L-gulonate 6-phosphate + H(+) = L-xylulose 5-phosphate + CO2. It functions in the pathway cofactor degradation; L-ascorbate degradation; D-xylulose 5-phosphate from L-ascorbate: step 2/4. Its function is as follows. Catalyzes the decarboxylation of 3-keto-L-gulonate-6-P into L-xylulose-5-P. Is involved in the anaerobic L-ascorbate utilization. The polypeptide is 3-keto-L-gulonate-6-phosphate decarboxylase UlaD (Escherichia fergusonii (strain ATCC 35469 / DSM 13698 / CCUG 18766 / IAM 14443 / JCM 21226 / LMG 7866 / NBRC 102419 / NCTC 12128 / CDC 0568-73)).